The sequence spans 471 residues: Ribulose bisphosphate carboxylase large chain (471 aa).

Residues N115 and T165 each contribute to the substrate site. K167 functions as the Proton acceptor in the catalytic mechanism. K169 contributes to the substrate binding site. Mg(2+)-binding residues include K193, D195, and E196. K193 carries the post-translational modification N6-carboxylysine. The active-site Proton acceptor is the H286. Residues R287, H319, and S371 each coordinate substrate.

It belongs to the RuBisCO large chain family. Type I subfamily. Heterohexadecamer of 8 large chains and 8 small chains. Mg(2+) serves as cofactor.

Its subcellular location is the carboxysome. The enzyme catalyses 2 (2R)-3-phosphoglycerate + 2 H(+) = D-ribulose 1,5-bisphosphate + CO2 + H2O. It carries out the reaction D-ribulose 1,5-bisphosphate + O2 = 2-phosphoglycolate + (2R)-3-phosphoglycerate + 2 H(+). Its function is as follows. RuBisCO catalyzes two reactions: the carboxylation of D-ribulose 1,5-bisphosphate, the primary event in carbon dioxide fixation, as well as the oxidative fragmentation of the pentose substrate in the photorespiration process. Both reactions occur simultaneously and in competition at the same active site. In Synechococcus sp. (strain WH7803), this protein is Ribulose bisphosphate carboxylase large chain.